A 466-amino-acid polypeptide reads, in one-letter code: Ribulose bisphosphate carboxylase large chain (466 aa).

At K4 the chain carries N6,N6,N6-trimethyllysine. The substrate site is built by N113 and T163. The Proton acceptor role is filled by K165. K167 contacts substrate. Residues K191, D193, and E194 each contribute to the Mg(2+) site. K191 is modified (N6-carboxylysine). H284 functions as the Proton acceptor in the catalytic mechanism. Positions 285, 317, and 369 each coordinate substrate.

The protein belongs to the RuBisCO large chain family. Type I subfamily. As to quaternary structure, heterohexadecamer of 8 large chains and 8 small chains; disulfide-linked. The disulfide link is formed within the large subunit homodimers. It depends on Mg(2+) as a cofactor. The disulfide bond which can form in the large chain dimeric partners within the hexadecamer appears to be associated with oxidative stress and protein turnover.

It is found in the plastid. The protein localises to the chloroplast. The enzyme catalyses 2 (2R)-3-phosphoglycerate + 2 H(+) = D-ribulose 1,5-bisphosphate + CO2 + H2O. It carries out the reaction D-ribulose 1,5-bisphosphate + O2 = 2-phosphoglycolate + (2R)-3-phosphoglycerate + 2 H(+). In terms of biological role, ruBisCO catalyzes two reactions: the carboxylation of D-ribulose 1,5-bisphosphate, the primary event in carbon dioxide fixation, as well as the oxidative fragmentation of the pentose substrate in the photorespiration process. Both reactions occur simultaneously and in competition at the same active site. In Justicia odora (Water willow), this protein is Ribulose bisphosphate carboxylase large chain.